The primary structure comprises 489 residues: Poly(A) RNA polymerase GLD2 (489 aa).

The disordered stretch occupies residues 93-118 (RQRFSCPSPHNQSARNSNFTSQPVTR). Over residues 100–116 (SPHNQSARNSNFTSQPV) the composition is skewed to polar residues. Mg(2+)-binding residues include D219 and D221. The 55-residue stretch at 386–440 (SLGDLFLGFLRYYATVFKWDKQVISVRMARTLPKSNCKEWKDKFICVEEPFNRTN) folds into the PAP-associated domain.

Belongs to the DNA polymerase type-B-like family. GLD2 subfamily. The cofactor is Mg(2+). Requires Mn(2+) as cofactor.

It localises to the cytoplasm. The catalysed reaction is RNA(n) + ATP = RNA(n)-3'-adenine ribonucleotide + diphosphate. Its function is as follows. Cytoplasmic poly(A) RNA polymerase that adds successive AMP monomers to the 3'-end of specific RNAs, forming a poly(A) tail. In contrast to the canonical nuclear poly(A) RNA polymerase, it only adds poly(A) to selected cytoplasmic mRNAs. May not play a role in replication-dependent histone mRNA degradation. This Danio rerio (Zebrafish) protein is Poly(A) RNA polymerase GLD2.